Consider the following 300-residue polypeptide: Cation-efflux pump FieF (300 aa).

Residues 24-44 (LLIKIFAWWYTGSVSILAALV) traverse the membrane as a helical segment. Residues D45 and D49 each coordinate Zn(2+). 2 helical membrane passes run 82-102 (AALAQSMFISGSALFLFLTGI) and 114-134 (AGVGVVVTLIALFSTLALVTF). Zn(2+) is bound by residues H153 and D157. 2 consecutive transmembrane segments (helical) span residues 156 to 176 (SDVMMNGAILVALGLSWYGWH) and 178 to 198 (ADALFALGIGIYILYSALRMG).

It belongs to the cation diffusion facilitator (CDF) transporter (TC 2.A.4) family. FieF subfamily. As to quaternary structure, homodimer.

Its subcellular location is the cell inner membrane. The catalysed reaction is Zn(2+)(in) + H(+)(out) = Zn(2+)(out) + H(+)(in). The enzyme catalyses Cd(2+)(in) + H(+)(out) = Cd(2+)(out) + H(+)(in). It catalyses the reaction Fe(2+)(in) + H(+)(out) = Fe(2+)(out) + H(+)(in). Divalent metal cation transporter which exports Zn(2+), Cd(2+) and possibly Fe(2+). May be involved in zinc and iron detoxification by efflux. In Klebsiella pneumoniae (strain 342), this protein is Cation-efflux pump FieF.